Reading from the N-terminus, the 351-residue chain is (S)-coclaurine N-methyltransferase (351 aa).

S-adenosyl-L-methionine-binding positions include 91 to 92, 126 to 134, 130 to 132, and 153 to 158; these read QS, VLDLGCGLG, GCG, and TSSVEQ. Cysteine 326 is an active-site residue.

It belongs to the CFA/CMAS family. Expressed in roots, stems, flower buds and at lower levels, in leaves. Restricted to sieve elements of the phloem adjacent or proximal to laticifers.

It is found in the cytoplasm. It carries out the reaction (S)-coclaurine + S-adenosyl-L-methionine = (S)-N-methylcoclaurine + S-adenosyl-L-homocysteine + H(+). The protein operates within alkaloid biosynthesis; (S)-reticuline biosynthesis; (S)-reticuline from (S)-norcoclaurine: step 2/4. Involved in the biosynthesis of benzylisoquinoline alkaloids. N-methyltransferase methylating (S)-coclaurine. 4'-O-methylcoclaurine and norlaudanine can also be used as substrates. This Papaver somniferum (Opium poppy) protein is (S)-coclaurine N-methyltransferase.